The sequence spans 630 residues: MQNDSNKNTLMFLVCAFAILIGYQFLVMGPQQKQREAELRAKKAAEAQVAVQPGMTIGADGTPQPLKLSRDEAKAQSPRIAVDTPALSGSIALKGARIDDLWLKRYTQTADKNSPPVELFRPEGAEHAWFADFGWAGIAGMTGLPTPQTVWTAAPGQVLRPTTPVVLTYDNGQGLVFTRTISVDADAMFTVADTVRNQGGAAVALAPYASVQRQGIPTEGPHGLGKTQIVYEGGIGVLGGIDGVEGGKYILQNKAKYPKWKKDKPLQDNLQSKGGWIGMTDKYWLAALVPQQSEMIKGRFQVKPVSGVDVYESAFTGAPKSLAAGATVTNTTRLFAGAKTVPLLTRYQYGGKPVVWWEFWNRPANVIPNFDKAVDWGMFEVITRPIFNVLEIFYKMVGNFGVAIMLLTVALKLILFPLADKSYESMAKMKKIAPEVEKLKVKNKDDPAKQQQEMMALYAKEKINPMMGCVPMLIQIPIFYSLYKVLTVTIEMRHAPFFGWITDLSARDPSTFMNLFGLIHWDPATAPLIGAFLSGPLHIGVWPLLYGFTMWLTTAMNPPAGDPIQQKIFQFFPIVFTFTLSQFAVGLVIYWCWSNVLTILQQYIIMHRYKVDNPIDQLVNRLRGKTVEAT.

5 helical membrane-spanning segments follow: residues 10-30, 396-416, 470-490, 528-548, and 571-591; these read LMFL…VMGP, MVGN…LILF, VPML…TVTI, LIGA…LYGF, and FFPI…VIYW.

This sequence belongs to the OXA1/ALB3/YidC family. Type 1 subfamily. In terms of assembly, interacts with the Sec translocase complex via SecD. Specifically interacts with transmembrane segments of nascent integral membrane proteins during membrane integration.

The protein resides in the cell inner membrane. Its function is as follows. Required for the insertion and/or proper folding and/or complex formation of integral membrane proteins into the membrane. Involved in integration of membrane proteins that insert both dependently and independently of the Sec translocase complex, as well as at least some lipoproteins. Aids folding of multispanning membrane proteins. This is Membrane protein insertase YidC from Caulobacter sp. (strain K31).